Reading from the N-terminus, the 299-residue chain is Bifunctional phosphoglucose/phosphomannose isomerase (299 aa).

Residues 27–177 (DEVEITPSSR…IHKLMEDFQK (151 aa)) form the SIS domain. The D-fructose 6-phosphate site is built by glycine 44, serine 45, serine 84, serine 86, threonine 89, and arginine 132. The Proton acceptor role is filled by glutamate 200. D-fructose 6-phosphate-binding residues include histidine 216 and lysine 295. Histidine 216 (proton donor) is an active-site residue. Lysine 295 serves as the catalytic Proton acceptor.

This sequence belongs to the PGI/PMI family. In terms of assembly, homodimer.

It carries out the reaction alpha-D-glucose 6-phosphate = beta-D-fructose 6-phosphate. The catalysed reaction is D-mannose 6-phosphate = D-fructose 6-phosphate. With respect to regulation, presence or absence of metal ions or EDTA does not significantly affect the phosphoglucose isomerase activity. Dual specificity isomerase that catalyzes the isomerization of both glucose-6-phosphate and mannose-6-phosphate to fructose-6-phosphate with nearly similar catalytic efficiency. Also catalyzes the epimerization of mannose 6-phosphate to glucose 6-phosphate but the rate of epimerization reaction is 20-fold lower than that of isomerization reaction. This is Bifunctional phosphoglucose/phosphomannose isomerase from Pyrobaculum calidifontis (strain DSM 21063 / JCM 11548 / VA1).